Consider the following 347-residue polypeptide: Microfibril-associated glycoprotein 3 (347 aa).

Residues 1 to 22 (MKLHYCLCILLVVTFVPTALVL) form the signal peptide. Residues 23–139 (EDVTPLGTNQ…TLRVIFTSGD (117 aa)) lie on the Extracellular side of the membrane. N-linked (GlcNAc...) asparagine glycans are attached at residues Asn31, Asn36, Asn63, and Asn103. Positions 47 to 130 (AGSYSGDDVI…SPTRASYSVT (84 aa)) constitute an Ig-like C2-type domain. Cys68 and Cys117 are disulfide-bonded. Residues 140 to 160 (MSVYYMVVCLIAFTITLILNV) form a helical membrane-spanning segment. At 161–347 (TRLCLMSTHL…SAEGSTHHRE (187 aa)) the chain is on the cytoplasmic side. The disordered stretch occupies residues 280 to 347 (NPELGRSNSP…SAEGSTHHRE (68 aa)). The segment covering 311 to 331 (VHLQSETKSIGTDSQDSSHFS) has biased composition (polar residues).

Post-translationally, glycosylated.

It localises to the cell membrane. Component of the elastin-associated microfibrils. The sequence is that of Microfibril-associated glycoprotein 3 (Mfap3) from Rattus norvegicus (Rat).